The sequence spans 86 residues: Toxin Td8 (86 aa).

The signal sequence occupies residues 1 to 20; that stretch reads MTRFVLFLSCFFLIGMVVEC. In terms of domain architecture, LCN-type CS-alpha/beta spans 21–83; sequence KDGYLVGDDG…IWNSATNRCR (63 aa). Disulfide bonds link Cys31/Cys82, Cys35/Cys57, Cys43/Cys63, and Cys47/Cys65. An Arginine amide modification is found at Arg83.

In terms of tissue distribution, expressed by the venom gland.

It is found in the secreted. In terms of biological role, beta toxins bind voltage-independently at site-4 of sodium channels (Nav) and shift the voltage of activation toward more negative potentials thereby affecting sodium channel activation and promoting spontaneous and repetitive firing. In Tityus discrepans (Venezuelan scorpion), this protein is Toxin Td8.